We begin with the raw amino-acid sequence, 40 residues long: Bacterioferritin heavy chain (40 aa).

In terms of domain architecture, Ferritin-like diiron spans 1-40 (MRGNPEVIDYLNMLIGGELAARDQYLIHSRMYEDWGLTKY). Residue glutamate 18 coordinates Fe cation.

It belongs to the bacterioferritin family. Oligomer consisting of two types of subunits: light chain and heavy chain.

Functionally, may perform analogous functions in iron detoxification and storage to that of animal ferritins. Contains approximately 750 iron atoms per molecule. The sequence is that of Bacterioferritin heavy chain from Absidia spinosa.